The following is a 371-amino-acid chain: Chaperone protein DnaJ (371 aa).

In terms of domain architecture, J spans 5–69; sequence DYYEVLGLSK…QKRAQYDQFG (65 aa). Residues 133-215 form a CR-type zinc finger; the sequence is GKELNVEIPV…CHGSGKVRKR (83 aa). Residues C146, C149, C163, C166, C189, C192, C203, and C206 each coordinate Zn(2+). CXXCXGXG motif repeat units lie at residues 146-153, 163-170, 189-196, and 203-210; these read CDTCKGSG, CKHCSGSG, CSHCSGTG, and CTTCHGSG.

This sequence belongs to the DnaJ family. Homodimer. Requires Zn(2+) as cofactor.

The protein localises to the cytoplasm. Its function is as follows. Participates actively in the response to hyperosmotic and heat shock by preventing the aggregation of stress-denatured proteins and by disaggregating proteins, also in an autonomous, DnaK-independent fashion. Unfolded proteins bind initially to DnaJ; upon interaction with the DnaJ-bound protein, DnaK hydrolyzes its bound ATP, resulting in the formation of a stable complex. GrpE releases ADP from DnaK; ATP binding to DnaK triggers the release of the substrate protein, thus completing the reaction cycle. Several rounds of ATP-dependent interactions between DnaJ, DnaK and GrpE are required for fully efficient folding. Also involved, together with DnaK and GrpE, in the DNA replication of plasmids through activation of initiation proteins. The protein is Chaperone protein DnaJ of Bacillus cereus (strain 03BB102).